Here is a 200-residue protein sequence, read N- to C-terminus: MALAYDGAIQRLIDAFGRLPGIGPKGAQRIAFYMLSAPEDEARDLAEAIEEVKAKIRFCDICGNVCESSPCPVCADPRRDRSVICVVEEPKDVMSIERTREYHGLYHVLGGAINPMANVGPADLRIPGLLKRLEGDEVKEVIMALDPNIEGEATTSYLTQLLRPVGVKVTRLASGLPVGSDLEYADEITLGRALAGRREA.

Residues 59–74 (CDICGNVCESSPCPVC) form a C4-type zinc finger. A Toprim domain is found at 82–177 (SVICVVEEPK…KVTRLASGLP (96 aa)).

Belongs to the RecR family.

In terms of biological role, may play a role in DNA repair. It seems to be involved in an RecBC-independent recombinational process of DNA repair. It may act with RecF and RecO. This Bifidobacterium longum (strain DJO10A) protein is Recombination protein RecR.